The sequence spans 524 residues: Rho guanine nucleotide exchange factor 3 (524 aa).

2 positions are modified to phosphoserine: Ser-46 and Ser-69. In terms of domain architecture, DH spans 121-303 (KRQEAIFELS…QGIVAEINTK (183 aa)). Positions 290 to 448 (INIIQGIVAE…WLNCIRQAKE (159 aa)) constitute a PH domain. Positions 461-524 (DSEGLVQGPG…CANSRPEESV (64 aa)) are disordered. Residues 472–484 (ENREPQGETKLEQ) are compositionally biased toward basic and acidic residues.

As to quaternary structure, interacts with RHOA and RHOB.

The protein resides in the cytoplasm. In terms of biological role, acts as a guanine nucleotide exchange factor (GEF) for RhoA and RhoB GTPases. In Mus musculus (Mouse), this protein is Rho guanine nucleotide exchange factor 3 (Arhgef3).